A 1284-amino-acid polypeptide reads, in one-letter code: Neuronal cell adhesion molecule (1284 aa).

The signal sequence occupies residues M1–A24. At L25–Q1143 the chain is on the extracellular side. 6 Ig-like C2-type domains span residues P41 to S129, P136 to S230, P243 to T332, P337 to N424, P430 to E517, and P521 to T608. Intrachain disulfides connect C63–C118 and C162–C213. N78 is a glycosylation site (N-linked (GlcNAc...) asparagine). N-linked (GlcNAc...) asparagine glycans are attached at residues N218 and N290. 2 cysteine pairs are disulfide-bonded: C268–C316 and C358–C408. N-linked (GlcNAc...) asparagine glycans are attached at residues N409, N483, N576, N581, N595, and N692. 2 disulfides stabilise this stretch: C452/C501 and C543/C592. Fibronectin type-III domains follow at residues P625–A720, N725–D819, A824–G926, P930–E1026, and Q1040–A1132. Residues Q707–G731 show a composition bias toward polar residues. The disordered stretch occupies residues Q707–I732. N-linked (GlcNAc...) asparagine glycans are attached at residues N778, N834, N885, N969, N985, N995, N1048, N1059, and N1091. The helical transmembrane segment at G1144 to I1166 threads the bilayer. Over R1167–V1284 the chain is Cytoplasmic. Composition is skewed to basic and acidic residues over residues P1175 to D1195, R1202 to K1212, and P1221 to D1230. Residues P1175–V1284 form a disordered region. Polar residues predominate over residues N1268–V1284.

This sequence belongs to the immunoglobulin superfamily. L1/neurofascin/NgCAM family. Heterodimer of an alpha and a beta chain. In terms of tissue distribution, retina and developing brain.

Its subcellular location is the cell membrane. Functionally, this protein is a cell adhesion molecule involved in neuron-neuron adhesion, neurite fasciculation, outgrowth of neurites, etc. Specifically involved in the development of optic fibres in the retina. The sequence is that of Neuronal cell adhesion molecule from Gallus gallus (Chicken).